A 299-amino-acid polypeptide reads, in one-letter code: Transcription factor BHLH148 (299 aa).

A disordered region spans residues 90 to 127; the sequence is RMGGGGGGGEKGEGEEMEEEEEVPQRRRRGQGADVESS. Over residues 102–111 the composition is skewed to acidic residues; that stretch reads EGEEMEEEEE. Positions 127–140 are basic motif; degenerate; sequence SRGFRHMMRERQRR. One can recognise a bHLH domain in the interval 127-176; it reads SRGFRHMMRERQRREKLSQSYADLYAMVSSRSKGDKNSIVQSAAIYIHEL. Positions 141 to 176 are helix-loop-helix motif; sequence EKLSQSYADLYAMVSSRSKGDKNSIVQSAAIYIHEL. The segment at 273-299 is disordered; the sequence is ERNQPDSDAPFPGSKGWTQTSHVQNVF. Polar residues predominate over residues 288 to 299; the sequence is GWTQTSHVQNVF.

The protein belongs to the bHLH protein family. As to quaternary structure, interacts with TIFY10A/JAZ6, TIFY10B/JAZ7, TIFY11A/JAZ9, TIFY11C/JAZ11, and TIFY11D/JAZ12.

It is found in the nucleus. Its function is as follows. May act on an initial response of jasmonate-regulated gene expression toward drought tolerance as part of a BHLH148-TIFY11D/JAZ12-COI1A complex. In Oryza sativa subsp. japonica (Rice), this protein is Transcription factor BHLH148.